A 51-amino-acid polypeptide reads, in one-letter code: Ovomucoid (51 aa).

The Kazal-like domain occupies 1–49; sequence VDCSEYPQPACTTERRPVCGSNNKTYSNKCNFCNAVVKSNGTLTVSHFG. 3 disulfide bridges follow: cysteine 3-cysteine 33, cysteine 11-cysteine 30, and cysteine 19-cysteine 51. N-linked (GlcNAc...) asparagine glycosylation occurs at asparagine 40.

It is found in the secreted. This is Ovomucoid from Polyplectron napoleonis (Palawan peacock-pheasant).